We begin with the raw amino-acid sequence, 965 residues long: Chondroitin synthase (965 aa).

The segment at 132–418 is galactosaminyltransferase; A1 domain; that stretch reads FTWYKNRKKS…IVKEKVPYIY (287 aa). UDP-N-acetyl-alpha-D-galactosamine-binding positions include proline 158, arginine 162, aspartate 189, tyrosine 218, arginine 224, and 240-241; that span reads DC. Residue aspartate 242 participates in Mn(2+) binding. 362–363 lines the UDP-N-acetyl-alpha-D-galactosamine pocket; that stretch reads ED. Residue histidine 387 participates in Mn(2+) binding. Residues 419–683 form a glucuronosyltransferase; A2 domain region; it reads RKLLPIEDSH…ESRKYIFNKT (265 aa). UDP-alpha-D-glucuronate contacts are provided by residues tyrosine 442, aspartate 470, and 518–521; that span reads QLDS. Residue aspartate 522 participates in Mn(2+) binding. UDP-alpha-D-glucuronate-binding positions include histidine 582 and 604–605; that span reads AV. Residue histidine 632 coordinates Mn(2+).

The protein belongs to the glycosyltransferase 2 family. CS/HAS subfamily. The cofactor is Mn(2+).

The protein resides in the cell membrane. The catalysed reaction is 3-O-(beta-D-GlcA-(1-&gt;3)-beta-D-GalNAc-(1-&gt;4)-beta-D-GlcA-(1-&gt;3)-beta-D-Gal-(1-&gt;3)-beta-D-Gal-(1-&gt;4)-beta-D-Xyl)-L-seryl-[protein] + UDP-N-acetyl-alpha-D-galactosamine = 3-O-(beta-D-GalNAc-(1-&gt;4)-beta-D-GlcA-(1-&gt;3)-beta-D-GalNAc-(1-&gt;4)-beta-D-GlcA-(1-&gt;3)-beta-D-Gal-(1-&gt;3)-beta-D-Gal-(1-&gt;4)-beta-D-Xyl)-L-seryl-[protein] + UDP + H(+). It catalyses the reaction 3-O-{beta-D-GlcA-(1-&gt;3)-[beta-D-GalNAc-(1-&gt;4)-beta-D-GlcA-(1-&gt;3)](n)-beta-D-GalNAc-(1-&gt;4)-beta-D-GlcA-(1-&gt;3)-beta-D-Gal-(1-&gt;3)-beta-D-Gal-(1-&gt;4)-beta-D-Xyl}-L-seryl-[protein] + UDP-N-acetyl-alpha-D-galactosamine = 3-O-{[beta-D-GalNAc-(1-&gt;4)-beta-D-GlcA-(1-&gt;3)](n+1)-beta-D-GalNAc-(1-&gt;4)-beta-D-GlcA-(1-&gt;3)-beta-D-Gal-(1-&gt;3)-beta-D-Gal-(1-&gt;4)-beta-D-Xyl}-L-seryl-[protein] + UDP + H(+). The enzyme catalyses 3-O-(beta-D-GalNAc-(1-&gt;4)-beta-D-GlcA-(1-&gt;3)-beta-D-Gal-(1-&gt;3)-beta-D-Gal-(1-&gt;4)-beta-D-Xyl)-L-seryl-[protein] + UDP-alpha-D-glucuronate = 3-O-(beta-D-GlcA-(1-&gt;3)-beta-D-GalNAc-(1-&gt;4)-beta-D-GlcA-(1-&gt;3)-beta-D-Gal-(1-&gt;3)-beta-D-Gal-(1-&gt;4)-beta-D-Xyl)-L-seryl-[protein] + UDP + H(+). It carries out the reaction 3-O-{[beta-D-GalNAc-(1-&gt;4)-beta-D-GlcA-(1-&gt;3)](n)-beta-D-GalNAc-(1-&gt;4)-beta-D-GlcA-(1-&gt;3)-beta-D-Gal-(1-&gt;3)-beta-D-Gal-(1-&gt;4)-beta-D-Xyl}-L-seryl-[protein] + UDP-alpha-D-glucuronate = 3-O-{beta-D-GlcA-(1-&gt;3)-[beta-D-GalNAc-(1-&gt;4)-beta-D-GlcA-(1-&gt;3)](n)-beta-D-GalNAc-(1-&gt;4)-beta-D-GlcA-(1-&gt;3)-beta-D-Gal-(1-&gt;3)-beta-D-Gal-(1-&gt;4)-beta-D-Xyl}-L-seryl-[protein] + UDP + H(+). Functionally, glycosyltransferase that catalyzes elongation of chondroitin, a polysaccharide composed of a repeating disaccharide of N-acetylgalactosamine (GalNAc) and glucuronic acid (GlcUA) units, by alternatively transferring the GlcUA and GalNAc moiety from UDP-GlcUA and UDP-GalNAc to the non-reducing ends of the chondroitin chain. Each chondroitin unit has the composition beta-(1-&gt;4)-GlcUA-beta-(1-&gt;3)-GalNAc. The chain is Chondroitin synthase (fcbD) from Pasteurella multocida (strain Pm70).